Here is a 512-residue protein sequence, read N- to C-terminus: ATP synthase subunit alpha, chloroplastic (512 aa).

170–177 contributes to the ATP binding site; that stretch reads GDRQTGKT.

It belongs to the ATPase alpha/beta chains family. In terms of assembly, F-type ATPases have 2 components, CF(1) - the catalytic core - and CF(0) - the membrane proton channel. CF(1) has five subunits: alpha(3), beta(3), gamma(1), delta(1), epsilon(1). CF(0) has four main subunits: a, b, b' and c.

Its subcellular location is the plastid. It is found in the chloroplast thylakoid membrane. It carries out the reaction ATP + H2O + 4 H(+)(in) = ADP + phosphate + 5 H(+)(out). Produces ATP from ADP in the presence of a proton gradient across the membrane. The alpha chain is a regulatory subunit. This chain is ATP synthase subunit alpha, chloroplastic, found in Chaetosphaeridium globosum (Charophycean green alga).